Here is a 248-residue protein sequence, read N- to C-terminus: Homeobox-leucine zipper protein HOX15 (248 aa).

The disordered stretch occupies residues 1–44 (MAQDDEDVGLALGLSLGSGGHRRQRESRDEAPSSAAASLLTLRL). Over residues 32–44 (PSSAAASLLTLRL) the composition is skewed to low complexity. The segment at residues 91 to 150 (NSRKKLRLSKEQSALLEDRFKEHSTLNPKQKVALAKQLNLRPRQVEVWFQNRRARTKLKQ) is a DNA-binding region (homeobox). The interval 149-193 (KQTEVDCELLKRCCETLTEENRRLHRELQQLRALTHSTAAGFFMA) is leucine-zipper. The interval 223-248 (PTAAADRTNKPTAPHLFSPFAKSAAC) is disordered.

It belongs to the HD-ZIP homeobox family. Class II subfamily. In terms of tissue distribution, expressed in seedlings, stems, leaf blades and panicles.

The protein localises to the nucleus. Functionally, probable transcription factor. The chain is Homeobox-leucine zipper protein HOX15 (HOX15) from Oryza sativa subsp. indica (Rice).